A 294-amino-acid chain; its full sequence is Ribosomal RNA small subunit methyltransferase H (294 aa).

S-adenosyl-L-methionine is bound by residues Gly37–His39, Asp58, Leu93, Asp105, and Gln112.

The protein belongs to the methyltransferase superfamily. RsmH family.

It is found in the cytoplasm. It carries out the reaction cytidine(1402) in 16S rRNA + S-adenosyl-L-methionine = N(4)-methylcytidine(1402) in 16S rRNA + S-adenosyl-L-homocysteine + H(+). Its function is as follows. Specifically methylates the N4 position of cytidine in position 1402 (C1402) of 16S rRNA. The chain is Ribosomal RNA small subunit methyltransferase H from Fervidobacterium nodosum (strain ATCC 35602 / DSM 5306 / Rt17-B1).